Consider the following 154-residue polypeptide: Myoglobin (154 aa).

Positions 2 to 148 constitute a Globin domain; the sequence is GLSDGEWQMV…FRNDIAAKYK (147 aa). Phosphoserine occurs at positions 4 and 32. Residue histidine 65 participates in nitrite binding. O2 is bound at residue histidine 65. Residue threonine 68 is modified to Phosphothreonine. Histidine 94 contributes to the heme b binding site. A phosphoserine mark is found at serine 121 and serine 133.

Belongs to the globin family. In terms of assembly, monomeric.

The protein localises to the cytoplasm. The protein resides in the sarcoplasm. It catalyses the reaction Fe(III)-heme b-[protein] + nitric oxide + H2O = Fe(II)-heme b-[protein] + nitrite + 2 H(+). It carries out the reaction H2O2 + AH2 = A + 2 H2O. Functionally, monomeric heme protein which primary function is to store oxygen and facilitate its diffusion within muscle tissues. Reversibly binds oxygen through a pentacoordinated heme iron and enables its timely and efficient release as needed during periods of heightened demand. Depending on the oxidative conditions of tissues and cells, and in addition to its ability to bind oxygen, it also has a nitrite reductase activity whereby it regulates the production of bioactive nitric oxide. Under stress conditions, like hypoxia and anoxia, it also protects cells against reactive oxygen species thanks to its pseudoperoxidase activity. This chain is Myoglobin, found in Rattus norvegicus (Rat).